The sequence spans 267 residues: uncharacterized protein (267 aa).

The tract at residues 1–55 (MTEERKETFEEEINQSERIDADEEPLSRMSRKASRQSKQKQKQKQKPRQERGEST) is disordered. Over residues 9 to 24 (FEEEINQSERIDADEE) the composition is skewed to acidic residues. Positions 29 to 46 (MSRKASRQSKQKQKQKQK) are enriched in basic residues. 5 consecutive transmembrane segments (helical) span residues 93–115 (YKYGLISMLIFSIIFSIGNWFQL), 135–157 (GFLVVLVYLLIFFAVMVFAIWAV), 173–195 (AVLGSLLVPVIAVSILWLIFAIV), 199–221 (MLTVLFTVLILFSIFFIIALYVQ), and 234–256 (YIYCVFAVVAIALLFTAVTWPFI).

It is found in the cell membrane. This is an uncharacterized protein from Bacillus subtilis (strain 168).